A 348-amino-acid chain; its full sequence is Beta-hexosaminidase (348 aa).

Substrate is bound by residues Asp62, Arg70, Arg134, and 164–165 (KH). His177 (proton donor/acceptor) is an active-site residue. Asp249 acts as the Nucleophile in catalysis.

The protein belongs to the glycosyl hydrolase 3 family. NagZ subfamily.

Its subcellular location is the cytoplasm. The catalysed reaction is Hydrolysis of terminal non-reducing N-acetyl-D-hexosamine residues in N-acetyl-beta-D-hexosaminides.. Its pathway is cell wall biogenesis; peptidoglycan recycling. Functionally, plays a role in peptidoglycan recycling by cleaving the terminal beta-1,4-linked N-acetylglucosamine (GlcNAc) from peptide-linked peptidoglycan fragments, giving rise to free GlcNAc, anhydro-N-acetylmuramic acid and anhydro-N-acetylmuramic acid-linked peptides. The sequence is that of Beta-hexosaminidase from Histophilus somni (strain 2336) (Haemophilus somnus).